A 461-amino-acid chain; its full sequence is MRTEWIKKRMNDKTRTQMYYAKKGIITEEMEYVAKEENLDPELVRSEVARGRLIIPANINHKHLKPMAIGRVSKTKVNSNIGASALASDIEEEVRKLETSVKYGADTVMDLSAGAKNMDEIREAIIAASPVPIGTVPMYQIIDEIGDVLELTYDDILRVLEKQAKQGVSYFTIHAGLLLRHMPEIAKRKMGIVSRGGSLTASWMLKHHKENPFYTIFDDILDICKEYDVSLSLGDSLRPGCLYDASDKAQLEELKVLGELTLRAWDKDVQVMIEGPGHVPINEIERNVRLEQIYCHEAPFYVLGPLVLDIGAGYDHIGSAIGAAMAAWYGVSMLCYVTPKEHLGLPNEEDVREGMLAYKIAAHSADIARKIPGARDKDDEMSDARYKFDWKKQFELALDPERAKEYHDETLPQEVFKEAEFCSMCGPKFCSYKVTQDAMENFDWDEFKKEAEEKMKAEANN.

Substrate-binding positions include N80, M109, Y139, H174, 194-196 (SRG), 235-238 (DSLR), and E274. Residue H278 coordinates Zn(2+). Y301 provides a ligand contact to substrate. H342 is a Zn(2+) binding site. The [4Fe-4S] cluster site is built by C422, C425, and C430.

This sequence belongs to the ThiC family. As to quaternary structure, homodimer. It depends on [4Fe-4S] cluster as a cofactor.

The catalysed reaction is 5-amino-1-(5-phospho-beta-D-ribosyl)imidazole + S-adenosyl-L-methionine = 4-amino-2-methyl-5-(phosphooxymethyl)pyrimidine + CO + 5'-deoxyadenosine + formate + L-methionine + 3 H(+). The protein operates within cofactor biosynthesis; thiamine diphosphate biosynthesis. In terms of biological role, catalyzes the synthesis of the hydroxymethylpyrimidine phosphate (HMP-P) moiety of thiamine from aminoimidazole ribotide (AIR) in a radical S-adenosyl-L-methionine (SAM)-dependent reaction. This chain is Phosphomethylpyrimidine synthase, found in Nautilia profundicola (strain ATCC BAA-1463 / DSM 18972 / AmH).